The chain runs to 830 residues: G-type lectin S-receptor-like serine/threonine-protein kinase SD1-13 (830 aa).

Residues 1 to 21 (MGCLLILLLTLICFSLRLCLA) form the signal peptide. One can recognise a Bulb-type lectin domain in the interval 22–145 (TDVITFSSEF…TNTGDEILWE (124 aa)). The Extracellular portion of the chain corresponds to 22–434 (TDVITFSSEF…SEFKKRTNRS (413 aa)). Residues Asn40, Asn53, and Asn82 are each glycosylated (N-linked (GlcNAc...) asparagine). Residues 283–321 (PSTKCDTYATCGQFASCRFNPGSTPPCMCIRGFKPQSYA) enclose the EGF-like; atypical domain. 2 disulfide bridges follow: Cys287–Cys299 and Cys293–Cys309. 3 N-linked (GlcNAc...) asparagine glycosylation sites follow: Asn327, Asn384, and Asn432. In terms of domain architecture, PAN spans 340–423 (CESRDNNDGS…TGVVFYIRLA (84 aa)). 2 cysteine pairs are disulfide-bonded: Cys377/Cys398 and Cys381/Cys387. Residues 435 to 455 (IVITVTLLVGAFLFAGTVVLA) form a helical membrane-spanning segment. Residues 456–830 (LWKIAKHREK…NVSLTKITGR (375 aa)) are Cytoplasmic-facing. One can recognise a Protein kinase domain in the interval 512-798 (FSITNKLGQG…NLPEPKQPAF (287 aa)). ATP-binding positions include 518–526 (LGQGGFGAV) and Lys540. The residue at position 545 (Thr545) is a Phosphothreonine. Ser546 and Ser561 each carry phosphoserine. The caM-binding stretch occupies residues 601–618 (VKQRLLDWKTRFNIIDGI). Catalysis depends on Asp637, which acts as the Proton acceptor. Ser641, Ser654, and Ser670 each carry phosphoserine. Phosphothreonine is present on Thr671. A phosphoserine mark is found at Ser714, Ser715, Ser726, Ser805, Ser809, Ser810, Ser813, Ser818, and Ser823. The segment at 789–830 (NLPEPKQPAFIPRRGTSEVESSGQSDPRASINNVSLTKITGR) is disordered. The span at 806 to 830 (EVESSGQSDPRASINNVSLTKITGR) shows a compositional bias: polar residues. Phosphothreonine is present on residues Thr825 and Thr828.

This sequence belongs to the protein kinase superfamily. Ser/Thr protein kinase family. As to quaternary structure, interacts with PUB9, PUB13 and PUB14. Binds to calmodulin (CaM) in a Ca(2+)-dependent manner. In terms of processing, autophosphorylated. In terms of tissue distribution, mostly expressed in rosette leaves, and, to a lower extent, in cauline leaves and stems.

It localises to the cell membrane. The enzyme catalyses L-seryl-[protein] + ATP = O-phospho-L-seryl-[protein] + ADP + H(+). It catalyses the reaction L-threonyl-[protein] + ATP = O-phospho-L-threonyl-[protein] + ADP + H(+). Functionally, receptor-like serine/threonine-protein kinase that represses the disease resistance signaling pathway triggered in response to bacterial pathogen such as Pseudomonas syringae pv. tomato. This is G-type lectin S-receptor-like serine/threonine-protein kinase SD1-13 (SD113) from Arabidopsis thaliana (Mouse-ear cress).